The sequence spans 473 residues: GTPase Der (473 aa).

EngA-type G domains are found at residues 3-167 and 203-378; these read FKVA…KGLE and LRVA…TFWN. Residues 9 to 16, 56 to 60, 119 to 122, 209 to 216, 256 to 260, and 321 to 324 each bind GTP; these read GRPNVGKS, DTAGL, NKCE, DTAGM, and NKWD. The KH-like domain occupies 379–463; the sequence is ARVPTARLNR…PIRLFMRKTH (85 aa).

Belongs to the TRAFAC class TrmE-Era-EngA-EngB-Septin-like GTPase superfamily. EngA (Der) GTPase family. Associates with the 50S ribosomal subunit.

Functionally, GTPase that plays an essential role in the late steps of ribosome biogenesis. This Parvibaculum lavamentivorans (strain DS-1 / DSM 13023 / NCIMB 13966) protein is GTPase Der.